A 510-amino-acid polypeptide reads, in one-letter code: Light-independent protochlorophyllide reductase subunit B (510 aa).

Asp-36 provides a ligand contact to [4Fe-4S] cluster. Asp-296 functions as the Proton donor in the catalytic mechanism. 431–432 contributes to the substrate binding site; sequence GM.

It belongs to the ChlB/BchB/BchZ family. As to quaternary structure, protochlorophyllide reductase is composed of three subunits; ChlL, ChlN and ChlB. Forms a heterotetramer of two ChlB and two ChlN subunits. [4Fe-4S] cluster serves as cofactor.

It is found in the plastid. Its subcellular location is the chloroplast. It catalyses the reaction chlorophyllide a + oxidized 2[4Fe-4S]-[ferredoxin] + 2 ADP + 2 phosphate = protochlorophyllide a + reduced 2[4Fe-4S]-[ferredoxin] + 2 ATP + 2 H2O. Its pathway is porphyrin-containing compound metabolism; chlorophyll biosynthesis (light-independent). Functionally, component of the dark-operative protochlorophyllide reductase (DPOR) that uses Mg-ATP and reduced ferredoxin to reduce ring D of protochlorophyllide (Pchlide) to form chlorophyllide a (Chlide). This reaction is light-independent. The NB-protein (ChlN-ChlB) is the catalytic component of the complex. The chain is Light-independent protochlorophyllide reductase subunit B from Angiopteris evecta (Mule's foot fern).